The sequence spans 1483 residues: Heme-responsive zinc finger transcription factor HAP1 (1483 aa).

Positions 1-50 (MSNTPYNSSVPSIASMTQSSVSRSPNMHTATTPGANTSSNSPPLHMSSDS) are enriched in polar residues. A disordered region spans residues 1-56 (MSNTPYNSSVPSIASMTQSSVSRSPNMHTATTPGANTSSNSPPLHMSSDSSKIKRK). The Zn(2+) site is built by cysteine 64, cysteine 67, cysteine 74, cysteine 81, cysteine 84, and cysteine 93. Residues 64 to 93 (CTICRKRKVKCDKLRPHCQQCTKTGVAHLC) constitute a DNA-binding region (zn(2)-C6 fungal-type). Residues 105–134 (EKELLKDNELKKLRERVKSLEKTLSKVHSS) are a coiled coil. The interval 126–208 (KTLSKVHSSP…ANSSSLSISN (83 aa)) is disordered. A compositionally biased stretch (low complexity) spans 130 to 142 (KVHSSPSSNSLKS). Composition is skewed to polar residues over residues 143–152 (YNTPESSNLF) and 160–176 (TLVNANTGSASSASHMH). A compositionally biased stretch (low complexity) spans 177–208 (QQQQQQQQQEQQQDFSRSANANANSSSLSISN). The interval 244–444 (KGDPYLKLLW…NTIPHHQPQS (201 aa)) is heme-responsive; required for HMC formation. 6 HRM repeats span residues 280-285 (KCPINH), 299-304 (KCPVDH), 323-328 (KCPVDH), 347-352 (RCPVDH), 389-394 (KCPVDH), and 415-420 (RCPIDH). Polar residues-rich tracts occupy residues 432-447 (STHNTIPHHQPQSGSH) and 706-734 (QLNATIPATSQDVSNNGSKKANPSTNPTL). Disordered regions lie at residues 432-458 (STHNTIPHHQPQSGSHARSHPAQNRKH) and 706-767 (QLNA…KENQ). Residues 735-759 (NNNMSAATTNSSSRSGSADSRSGSN) show a composition bias toward low complexity. An HRM 7 repeat occupies 1192–1197 (KCPVYQ).

Binds DNA as a homodimer. Interacts with SRO9 and YDJ1. In the absence of heme, binds to at least four cellular proteins, including YDJ1 and SRO9, forming a high-molecular-weight complex (HMC) which results in repression of its activity and dictates its DNA-binding specificity.

It localises to the nucleus. Regulation of oxygen dependent gene expression. It modulates the expression of Iso-1 (CYP1) and Iso-2 (CYP3) cytochrome c. In response to heme, promotes transcription of genes encoding functions required for respiration, controlling oxidative damage and repression of anaerobic genes. Binds to the sequence 5'-CGGNNNTNNCGG-3'. This Saccharomyces cerevisiae (strain Lalvin EC1118 / Prise de mousse) (Baker's yeast) protein is Heme-responsive zinc finger transcription factor HAP1 (HAP1).